A 925-amino-acid polypeptide reads, in one-letter code: Protein translocase subunit SecA (925 aa).

ATP is bound by residues glutamine 87, 105 to 109, and aspartate 531; that span reads GEGKT. The segment at 867-909 is disordered; that stretch reads AAGADMRFQHSQPESVLHKPEAGEGEEAQPFRRETPKVGRNDP. The span at 895-906 shows a compositional bias: basic and acidic residues; the sequence is QPFRRETPKVGR. Zn(2+) is bound by residues cysteine 910, cysteine 912, cysteine 921, and histidine 922.

It belongs to the SecA family. Monomer and homodimer. Part of the essential Sec protein translocation apparatus which comprises SecA, SecYEG and auxiliary proteins SecDF-YajC and YidC. It depends on Zn(2+) as a cofactor.

The protein localises to the cell inner membrane. It is found in the cytoplasm. It catalyses the reaction ATP + H2O + cellular proteinSide 1 = ADP + phosphate + cellular proteinSide 2.. Part of the Sec protein translocase complex. Interacts with the SecYEG preprotein conducting channel. Has a central role in coupling the hydrolysis of ATP to the transfer of proteins into and across the cell membrane, serving both as a receptor for the preprotein-SecB complex and as an ATP-driven molecular motor driving the stepwise translocation of polypeptide chains across the membrane. In Thioalkalivibrio sulfidiphilus (strain HL-EbGR7), this protein is Protein translocase subunit SecA.